A 220-amino-acid polypeptide reads, in one-letter code: Claudin-22 (220 aa).

Residues 1-10 (MGLVFRTATQ) are Cytoplasmic-facing. The helical transmembrane segment at 11 to 31 (AAALLLSLLGWVLSCLTNYLP) threads the bilayer. The Extracellular portion of the chain corresponds to 32 to 81 (HWKNLNLELNEMENWTMGLWKSCVIQEEVGRQCKDFDSFLALPAELQVSR). The helical transmembrane segment at 82–102 (VLMSLCNGLGLLGLLASGCGL) threads the bilayer. The Cytoplasmic portion of the chain corresponds to 103 to 120 (DCLRLGETQEGLKKRLLT). The chain crosses the membrane as a helical span at residues 121–141 (LGGTLLWTSGVMVLVPVSWVA). Residues 142-164 (HKTVREFWDETMPEIVPRWEFGE) lie on the Extracellular side of the membrane. Residues 165–185 (ALFLGWFAGFCLVLGGCVLHC) form a helical membrane-spanning segment. At 186-220 (AACWSPAPAASSHYAVAGPRDHQQHLELKQANPEI) the chain is on the cytoplasmic side.

The protein belongs to the claudin family.

The protein resides in the cell junction. It localises to the tight junction. The protein localises to the cell membrane. Plays a major role in tight junction-specific obliteration of the intercellular space, through calcium-independent cell-adhesion activity. This chain is Claudin-22 (Cldn22), found in Mus musculus (Mouse).